A 177-amino-acid chain; its full sequence is tRNA (cytidine(56)-2'-O)-methyltransferase (177 aa).

Residues leucine 84 and 109–113 contribute to the S-adenosyl-L-methionine site; that span reads GAEKV.

The protein belongs to the aTrm56 family. As to quaternary structure, homodimer.

The protein resides in the cytoplasm. It catalyses the reaction cytidine(56) in tRNA + S-adenosyl-L-methionine = 2'-O-methylcytidine(56) in tRNA + S-adenosyl-L-homocysteine + H(+). Functionally, specifically catalyzes the AdoMet-dependent 2'-O-ribose methylation of cytidine at position 56 in tRNAs. The polypeptide is tRNA (cytidine(56)-2'-O)-methyltransferase (Methanosarcina mazei (strain ATCC BAA-159 / DSM 3647 / Goe1 / Go1 / JCM 11833 / OCM 88) (Methanosarcina frisia)).